The following is a 311-amino-acid chain: MAAENSSFVTQFILAGLTDQPGVQIPLFFLFLGFYVVTVVGNLGLITLIRLNSHLHTPMYFFLYNLSFIDFCYSSVITPKMLMSFVLKKNSISYAGCMTQLFFFLFFVVSESFILSAMAYDRYVAICNPLLYMVTMSPQVCFLLLLGVYGMGFAGAMAHTACMMGVTFCANNLVNHYMCDILPLLECACTSTYVNELVVFVVVGIDIGVPTVTIFISYALILSSIFHIDSTEGRSKAFSTCSSHIIAVSLFFGSGAFMYLKPFSLLAMNQGKVSSLFYTTVVPMLNPLIYSLRNKDVKVALKKILNKNAFS.

Residues Met1 to Ile25 lie on the Extracellular side of the membrane. A glycan (N-linked (GlcNAc...) asparagine) is linked at Asn5. A helical transmembrane segment spans residues Pro26–Ile46. Topologically, residues Thr47 to His54 are cytoplasmic. Residues Leu55–Ser75 form a helical membrane-spanning segment. At Val76–Thr99 the chain is on the extracellular side. A disulfide bond links Cys97 and Cys189. The chain crosses the membrane as a helical span at residues Gln100–Tyr120. At Asp121–Gln139 the chain is on the cytoplasmic side. A helical membrane pass occupies residues Val140 to Thr160. Over Ala161 to Leu197 the chain is Extracellular. Residues Val198–Ser217 form a helical membrane-spanning segment. Topologically, residues Tyr218–Ala237 are cytoplasmic. The chain crosses the membrane as a helical span at residues Phe238–Met258. Topologically, residues Tyr259 to Gly271 are extracellular. The chain crosses the membrane as a helical span at residues Lys272–Leu292. The Cytoplasmic segment spans residues Arg293 to Ser311.

This sequence belongs to the G-protein coupled receptor 1 family. Expressed in the tongue and testis.

It localises to the cell membrane. In terms of biological role, odorant receptor (Potential). May be involved in taste perception. This chain is Olfactory receptor 8B8, found in Homo sapiens (Human).